Reading from the N-terminus, the 911-residue chain is Bifunctional aspartokinase/homoserine dehydrogenase 1, chloroplastic (911 aa).

The N-terminal 82 residues, 1-82 (MPVVSLAKVV…VENGHLPKGD (82 aa)), are a transit peptide targeting the chloroplast. The tract at residues 83–331 (SWAVHKFGGT…VSEAVVLKTL (249 aa)) is aspartokinase. The tract at residues 332–557 (SYQEAWEMSY…LSRTTLAVGI (226 aa)) is interface. ACT domains are found at residues 407–482 (VEGT…IIPN) and 488–565 (AVGQ…LIGG). Residues 558 to 911 (IGPGLIGGTL…RLAFYLGAPS (354 aa)) form a homoserine dehydrogenase region. NAD(+) contacts are provided by isoleucine 563 and threonine 644. Residues isoleucine 563, threonine 644, and lysine 668 each coordinate NADP(+). 3 residues coordinate NADPH: isoleucine 563, threonine 644, and lysine 668. The Na(+) site is built by glutamate 695, valine 698, alanine 700, and leucine 702. NADP(+) is bound by residues glycine 753 and glutamate 756. Glutamate 756 and aspartate 767 together coordinate L-homoserine. Residue lysine 771 is the Proton donor of the active site. Glycine 888 serves as a coordination point for NAD(+). Glycine 888 provides a ligand contact to NADP(+). Glycine 888 lines the NADPH pocket.

In the N-terminal section; belongs to the aspartokinase family. It in the C-terminal section; belongs to the homoserine dehydrogenase family. In terms of assembly, homo- or heterodimer. Requires a metal cation as cofactor.

It is found in the plastid. The protein localises to the chloroplast. It carries out the reaction L-homoserine + NADP(+) = L-aspartate 4-semialdehyde + NADPH + H(+). It catalyses the reaction L-homoserine + NAD(+) = L-aspartate 4-semialdehyde + NADH + H(+). The catalysed reaction is L-aspartate + ATP = 4-phospho-L-aspartate + ADP. It functions in the pathway amino-acid biosynthesis; L-lysine biosynthesis via DAP pathway; (S)-tetrahydrodipicolinate from L-aspartate: step 1/4. The protein operates within amino-acid biosynthesis; L-methionine biosynthesis via de novo pathway; L-homoserine from L-aspartate: step 1/3. It participates in amino-acid biosynthesis; L-methionine biosynthesis via de novo pathway; L-homoserine from L-aspartate: step 3/3. Its pathway is amino-acid biosynthesis; L-threonine biosynthesis; L-threonine from L-aspartate: step 1/5. It functions in the pathway amino-acid biosynthesis; L-threonine biosynthesis; L-threonine from L-aspartate: step 3/5. With respect to regulation, inhibition of aspartate kinase activity by threonine and leucine and 3-fold activation by cysteine, isoleucine, valine, serine and alanine at 2.5 mM. Partial inhibition of homoserine dehydrogenase activity by threonine and cysteine (14% of activity remaining at saturation with either amino acid). No synergy between the effectors for both activation or inhibition. Functionally, bifunctional aspartate kinase and homoserine dehydrogenase that catalyzes the first and the third steps toward the synthesis of lysine, methionine and threonine from aspartate. The chain is Bifunctional aspartokinase/homoserine dehydrogenase 1, chloroplastic from Arabidopsis thaliana (Mouse-ear cress).